Reading from the N-terminus, the 773-residue chain is Endonuclease MutS2 (773 aa).

Residue 334–341 (GANAGGKT) participates in ATP binding. The Smr domain maps to 698–773 (VDLRGMRADV…GDGMTMVTLK (76 aa)).

The protein belongs to the DNA mismatch repair MutS family. MutS2 subfamily. Homodimer. Binds to stalled ribosomes, contacting rRNA.

Its function is as follows. Endonuclease that is involved in the suppression of homologous recombination and thus may have a key role in the control of bacterial genetic diversity. Functionally, acts as a ribosome collision sensor, splitting the ribosome into its 2 subunits. Detects stalled/collided 70S ribosomes which it binds and splits by an ATP-hydrolysis driven conformational change. Acts upstream of the ribosome quality control system (RQC), a ribosome-associated complex that mediates the extraction of incompletely synthesized nascent chains from stalled ribosomes and their subsequent degradation. Probably generates substrates for RQC. This is Endonuclease MutS2 from Solidesulfovibrio magneticus (strain ATCC 700980 / DSM 13731 / RS-1) (Desulfovibrio magneticus).